A 472-amino-acid polypeptide reads, in one-letter code: Eukaryotic translation initiation factor 2 subunit 3, Y-linked (472 aa).

N-acetylalanine is present on A2. S16 carries the post-translational modification Phosphoserine. A tr-type G domain is found at 39 to 247; it reads QATINIGTIG…YIVKKIPVPL (209 aa). The G1 stretch occupies residues 48–55; it reads GHVAHGKS. Position 51 to 56 (51 to 56) interacts with GTP; it reads AHGKST. A G2 region spans residues 76-80; it reads NITIK. The tract at residues 134-137 is G3; it reads DCPG. Residues 190-193 and 225-227 each bind GTP; these read NKID and SAQ. The tract at residues 190-193 is G4; the sequence is NKID. Residues 225–227 form a G5 region; it reads SAQ.

It belongs to the TRAFAC class translation factor GTPase superfamily. Classic translation factor GTPase family. EIF2G subfamily. In terms of assembly, eIF2 is a heterotrimer composed of an alpha (EIF2S1), a beta (EIF2S2) and a gamma (Eif2s3x and Eif2s3y) chain. eIF2 is member of the 43S pre-initiation complex (43S PIC). As to expression, widely expressed in males.

The enzyme catalyses GTP + H2O = GDP + phosphate + H(+). Member of the eIF2 complex that functions in the early steps of protein synthesis by forming a ternary complex with GTP and initiator tRNA. This complex binds to a 40S ribosomal subunit, followed by mRNA binding to form the 43S pre-initiation complex (43S PIC). Junction of the 60S ribosomal subunit to form the 80S initiation complex is preceded by hydrolysis of the GTP bound to eIF2 and release of an eIF2-GDP binary complex. In order for eIF2 to recycle and catalyze another round of initiation, the GDP bound to eIF2 must exchange with GTP by way of a reaction catalyzed by eIF-2B. Along with its paralog on chromosome X, may contribute to spermatogenesis up to the round spermatid stage. This is Eukaryotic translation initiation factor 2 subunit 3, Y-linked (Eif2s3y) from Rattus norvegicus (Rat).